An 844-amino-acid chain; its full sequence is Serrate RNA effector molecule homolog B (844 aa).

4 disordered regions span residues 1-90 (MADS…HGSD), 277-401 (EAAK…PRPL), 555-575 (ELLS…GNPT), and 794-825 (PNPY…MRGD). 2 stretches are compositionally biased toward basic and acidic residues: residues 16–73 (FRRE…RHDI) and 277–337 (EAAK…ETRK). Positions 349–359 (SDDGSDSESDT) are enriched in acidic residues. The segment covering 376 to 397 (DTPKKEEETEKPKEKPKEDTVK) has biased composition (basic and acidic residues).

Belongs to the ARS2 family. As to quaternary structure, interacts ncbp1/cbp80.

It localises to the nucleus. It is found in the nucleoplasm. Its subcellular location is the cytoplasm. Its function is as follows. Acts as a mediator between the cap-binding complex (CBC) and the primary microRNAs (miRNAs) processing machinery during cell proliferation. Contributes to the stability and delivery of capped primary miRNA transcripts to the primary miRNA processing complex, thereby playing a role in RNA-mediated gene silencing (RNAi) by miRNAs. In Xenopus laevis (African clawed frog), this protein is Serrate RNA effector molecule homolog B (srrt-b).